The sequence spans 404 residues: Formate-dependent phosphoribosylglycinamide formyltransferase (404 aa).

N(1)-(5-phospho-beta-D-ribosyl)glycinamide contacts are provided by residues 25-26 and glutamate 85; that span reads EL. Residues arginine 118, lysine 159, 164–169, 199–202, and glutamate 207 each bind ATP; these read SSGKGQ and EGFI. The ATP-grasp domain maps to 123 to 318; sequence RLAAEELGLP…EFELHARAIL (196 aa). Mg(2+) contacts are provided by glutamate 277 and glutamate 289. N(1)-(5-phospho-beta-D-ribosyl)glycinamide is bound by residues aspartate 296, lysine 365, and 372-373; that span reads RR.

This sequence belongs to the PurK/PurT family. As to quaternary structure, homodimer.

It carries out the reaction N(1)-(5-phospho-beta-D-ribosyl)glycinamide + formate + ATP = N(2)-formyl-N(1)-(5-phospho-beta-D-ribosyl)glycinamide + ADP + phosphate + H(+). It functions in the pathway purine metabolism; IMP biosynthesis via de novo pathway; N(2)-formyl-N(1)-(5-phospho-D-ribosyl)glycinamide from N(1)-(5-phospho-D-ribosyl)glycinamide (formate route): step 1/1. In terms of biological role, involved in the de novo purine biosynthesis. Catalyzes the transfer of formate to 5-phospho-ribosyl-glycinamide (GAR), producing 5-phospho-ribosyl-N-formylglycinamide (FGAR). Formate is provided by PurU via hydrolysis of 10-formyl-tetrahydrofolate. This Burkholderia pseudomallei (strain 1106a) protein is Formate-dependent phosphoribosylglycinamide formyltransferase.